The chain runs to 500 residues: Endonuclease domain-containing 1 protein (500 aa).

Positions Met1–Gly21 are cleaved as a signal peptide. The segment at Glu293–Gly323 is disordered. Low complexity predominate over residues Gln297 to Pro317. Position 407 is an N6-acetyllysine (Lys407).

This sequence belongs to the DNA/RNA non-specific endonuclease family. As to quaternary structure, interacts with RNF26; this interaction is important to modulate innate immune signaling through the cGAS-STING pathway.

Its subcellular location is the secreted. May act as a DNase and a RNase. Plays a role in the modulation of innate immune signaling through the cGAS-STING pathway by interacting with RNF26. The chain is Endonuclease domain-containing 1 protein (ENDOD1) from Homo sapiens (Human).